The sequence spans 340 residues: Phosphate acyltransferase (340 aa).

It belongs to the PlsX family. Homodimer. Probably interacts with PlsY.

The protein resides in the cytoplasm. It catalyses the reaction a fatty acyl-[ACP] + phosphate = an acyl phosphate + holo-[ACP]. It participates in lipid metabolism; phospholipid metabolism. In terms of biological role, catalyzes the reversible formation of acyl-phosphate (acyl-PO(4)) from acyl-[acyl-carrier-protein] (acyl-ACP). This enzyme utilizes acyl-ACP as fatty acyl donor, but not acyl-CoA. This is Phosphate acyltransferase from Trichodesmium erythraeum (strain IMS101).